Here is a 526-residue protein sequence, read N- to C-terminus: Chaperonin GroEL, chloroplastic (526 aa).

ATP is bound by residues 29 to 32 (TLGP), 86 to 90 (DGTTT), G412, 476 to 478 (DAA), and D492.

This sequence belongs to the chaperonin (HSP60) family. Forms a cylinder of 14 subunits composed of two heptameric rings stacked back-to-back. Interacts with the co-chaperonin GroES.

It localises to the plastid. The protein resides in the chloroplast. It carries out the reaction ATP + H2O + a folded polypeptide = ADP + phosphate + an unfolded polypeptide.. Together with its co-chaperonin GroES, plays an essential role in assisting protein folding. The GroEL-GroES system forms a nano-cage that allows encapsulation of the non-native substrate proteins and provides a physical environment optimized to promote and accelerate protein folding. The chain is Chaperonin GroEL, chloroplastic from Cyanidioschyzon merolae (strain NIES-3377 / 10D) (Unicellular red alga).